The following is a 317-amino-acid chain: Melanocyte-stimulating hormone receptor (317 aa).

Residues 1 to 37 (MPVQGSQRRLLGSLNSTPTATPRLGLAANQTGARCLE) are Extracellular-facing. An N-linked (GlcNAc...) asparagine glycan is attached at Asn-29. Residues 38–63 (VSIPDGLFLSLGLVSLVENVLVVVAI) form a helical membrane-spanning segment. Residues 64-72 (ARNRNLHSP) are Cytoplasmic-facing. Residues 73-93 (MYCFICCLALSDLLVSGSNML) form a helical membrane-spanning segment. At 94 to 118 (ETAVILLLEAGALAARAAVVQQLDN) the chain is on the extracellular side. A helical transmembrane segment spans residues 119 to 140 (VIDVITCSSMLSSLCFLGAIAV). The Cytoplasmic segment spans residues 141–163 (DRYISIFYALRYHSIVTLRRARR). The helical transmembrane segment at 164–183 (VVAAIWVASVLFSTLFIAYC) threads the bilayer. Topologically, residues 184–191 (DHAAVLLS) are extracellular. A helical membrane pass occupies residues 192–211 (LVVFFLAMLVLMAVLYVHML). Over 212 to 240 (ARACQHAQGIAQLHKRQRPAHQGVGLKGA) the chain is Cytoplasmic. A helical membrane pass occupies residues 241 to 266 (ATLTILLGIFFLCWGPFFLHLTLIVL). Topologically, residues 267 to 279 (CPQHPTCSCIFKN) are extracellular. The chain crosses the membrane as a helical span at residues 280-300 (FNLFLTLIICNAIIDPLIYAF). Over 301 to 317 (RSQELRRTLKKVLLCSW) the chain is Cytoplasmic. Residue Cys-315 is the site of S-palmitoyl cysteine attachment.

The protein belongs to the G-protein coupled receptor 1 family. Interacts with MGRN1, but does not undergo MGRN1-mediated ubiquitination; this interaction competes with GNAS-binding and thus inhibits agonist-induced cAMP production. Interacts with OPN3; the interaction results in a decrease in MC1R-mediated cAMP signaling and ultimately a decrease in melanin production in melanocytes.

Its subcellular location is the cell membrane. Its function is as follows. Receptor for MSH (alpha, beta and gamma) and ACTH. The activity of this receptor is mediated by G proteins which activate adenylate cyclase. Mediates melanogenesis, the production of eumelanin (black/brown) and phaeomelanin (red/yellow), via regulation of cAMP signaling in melanocytes. This chain is Melanocyte-stimulating hormone receptor (MC1R), found in Trachypithecus auratus (Javan langur).